The sequence spans 207 residues: Outer-membrane lipoprotein LolB (207 aa).

The N-terminal stretch at 1-21 is a signal peptide; it reads MTLPDFRLIRLLPLASLVLTA. Residue cysteine 22 is the site of N-palmitoyl cysteine attachment. Cysteine 22 carries the S-diacylglycerol cysteine lipid modification.

Belongs to the LolB family. In terms of assembly, monomer.

Its subcellular location is the cell outer membrane. Functionally, plays a critical role in the incorporation of lipoproteins in the outer membrane after they are released by the LolA protein. The sequence is that of Outer-membrane lipoprotein LolB from Salmonella typhi.